A 792-amino-acid chain; its full sequence is Starch synthase 2, chloroplastic/amyloplastic (792 aa).

Residues 1–55 constitute a chloroplast transit peptide; that stretch reads MASVAESSFPLLCQIKTQRRINSSTLRHSRVSYHDLPSGSLSFRSRSFVLGHRCK. Positions 105-295 are disordered; it reads IKESTPDLDD…GKDEEKPPPL (191 aa). The span at 145–156 shows a compositional bias: polar residues; it reads GSVSPSTYGKSS. A compositionally biased stretch (low complexity) spans 179–192; that stretch reads SSASVISSSPVTSP. Residues 221–233 are compositionally biased toward polar residues; the sequence is SVMTSPEKTSDPV. Basic and acidic residues predominate over residues 266–275; sequence KTEKYVEKTP. K315 is an ADP-alpha-D-glucose binding site.

The protein belongs to the glycosyltransferase 1 family. Bacterial/plant glycogen synthase subfamily. Expressed in roots, leaves and flowers.

It localises to the plastid. Its subcellular location is the chloroplast. The protein localises to the amyloplast. It carries out the reaction [(1-&gt;4)-alpha-D-glucosyl](n) + ADP-alpha-D-glucose = [(1-&gt;4)-alpha-D-glucosyl](n+1) + ADP + H(+). Its pathway is glycan biosynthesis; starch biosynthesis. Functionally, involved in the synthesis of glycan chains within amylopectin in leaves. Is required to produce chains with a degree of polymerization of 12 to 25 (DP12-DP25). This is Starch synthase 2, chloroplastic/amyloplastic (SS2) from Arabidopsis thaliana (Mouse-ear cress).